A 284-amino-acid polypeptide reads, in one-letter code: tRNA uridine(34) hydroxylase (284 aa).

One can recognise a Rhodanese domain in the interval 132-226 (AGRPVVMLDT…YFEEVGGAHY (95 aa)). The active-site Cysteine persulfide intermediate is the C186.

The protein belongs to the TrhO family.

It carries out the reaction uridine(34) in tRNA + AH2 + O2 = 5-hydroxyuridine(34) in tRNA + A + H2O. In terms of biological role, catalyzes oxygen-dependent 5-hydroxyuridine (ho5U) modification at position 34 in tRNAs. This chain is tRNA uridine(34) hydroxylase, found in Burkholderia cenocepacia (strain HI2424).